The chain runs to 251 residues: Putative glutamine amidotransferase YLR126C (251 aa).

Residues 48–232 (EVFHVQKNVF…NRYERQCQEL (185 aa)) form the Glutamine amidotransferase type-1 domain. Active-site for GATase activity residues include C112, H198, and E200.

It localises to the cytoplasm. Its function is as follows. May have a role in copper and iron homeostasis. This Saccharomyces cerevisiae (strain ATCC 204508 / S288c) (Baker's yeast) protein is Putative glutamine amidotransferase YLR126C.